The primary structure comprises 203 residues: MHKAPESVLNALVPMVVEQTAKGERSYDIYSRLLKERVIFLVGQVEEHMANLIVAQLLFLESESPDKDIYLYINSPGGSVTAGMAIYDTMQFIKPNVSTVCIGQAASMGAFLLAGGAKGKRHCLPNSRVMIHQPLGGFQGQASDIAIHAQEILGIKNKLNQMLAEHTGQPLEVIERDTDRDNFMSATQAMDYGLVDSLLTSRS.

The active-site Nucleophile is serine 107. Histidine 132 is an active-site residue.

Belongs to the peptidase S14 family. As to quaternary structure, fourteen ClpP subunits assemble into 2 heptameric rings which stack back to back to give a disk-like structure with a central cavity, resembling the structure of eukaryotic proteasomes.

It is found in the cytoplasm. It carries out the reaction Hydrolysis of proteins to small peptides in the presence of ATP and magnesium. alpha-casein is the usual test substrate. In the absence of ATP, only oligopeptides shorter than five residues are hydrolyzed (such as succinyl-Leu-Tyr-|-NHMec, and Leu-Tyr-Leu-|-Tyr-Trp, in which cleavage of the -Tyr-|-Leu- and -Tyr-|-Trp bonds also occurs).. Functionally, cleaves peptides in various proteins in a process that requires ATP hydrolysis. Has a chymotrypsin-like activity. Plays a major role in the degradation of misfolded proteins. The polypeptide is ATP-dependent Clp protease proteolytic subunit (Shewanella denitrificans (strain OS217 / ATCC BAA-1090 / DSM 15013)).